The primary structure comprises 622 residues: 1-deoxy-D-xylulose-5-phosphate synthase (622 aa).

Thiamine diphosphate-binding positions include histidine 80 and 121–123 (GHS). Residue aspartate 152 participates in Mg(2+) binding. Thiamine diphosphate-binding positions include 153–154 (GA), asparagine 181, tyrosine 288, and glutamate 370. Asparagine 181 provides a ligand contact to Mg(2+).

Belongs to the transketolase family. DXPS subfamily. In terms of assembly, homodimer. Requires Mg(2+) as cofactor. Thiamine diphosphate serves as cofactor.

It catalyses the reaction D-glyceraldehyde 3-phosphate + pyruvate + H(+) = 1-deoxy-D-xylulose 5-phosphate + CO2. The protein operates within metabolic intermediate biosynthesis; 1-deoxy-D-xylulose 5-phosphate biosynthesis; 1-deoxy-D-xylulose 5-phosphate from D-glyceraldehyde 3-phosphate and pyruvate: step 1/1. In terms of biological role, catalyzes the acyloin condensation reaction between C atoms 2 and 3 of pyruvate and glyceraldehyde 3-phosphate to yield 1-deoxy-D-xylulose-5-phosphate (DXP). The chain is 1-deoxy-D-xylulose-5-phosphate synthase from Shewanella baltica (strain OS185).